Here is a 595-residue protein sequence, read N- to C-terminus: Tectonic-3 (595 aa).

An N-terminal signal peptide occupies residues 1 to 22 (MCTLQLHLLLLVVLMLSETARP). Positions 23 to 62 (QPSSTARAFPTSWGLEPVTPEVPTSAPPDSSESPTPWTLS) are disordered. The Extracellular portion of the chain corresponds to 23-575 (QPSSTARAFP…ALSRGASVQK (553 aa)). Over residues 49–62 (PPDSSESPTPWTLS) the composition is skewed to polar residues. 2 N-linked (GlcNAc...) asparagine glycosylation sites follow: Asn167 and Asn336. A helical membrane pass occupies residues 576–594 (DSLVLILCVLLLGLLNSQT). Lys595 is a topological domain (cytoplasmic).

The protein belongs to the tectonic family. In terms of assembly, part of the tectonic-like complex (also named B9 complex).

It localises to the membrane. In terms of biological role, part of the tectonic-like complex which is required for tissue-specific ciliogenesis and may regulate ciliary membrane composition. May be involved in apoptosis regulation. Necessary for signal transduction through the sonic hedgehog (Shh) signaling pathway. This is Tectonic-3 (Tctn3) from Mus musculus (Mouse).